A 193-amino-acid chain; its full sequence is dCTP deaminase (193 aa).

DCTP is bound by residues 110-115 (RSSLAR), aspartate 128, 136-138 (VLE), tyrosine 171, lysine 178, and glutamine 182. The active-site Proton donor/acceptor is glutamate 138. The disordered stretch occupies residues 171–193 (YNKRKNAKYKDQQDAVASRISQD).

It belongs to the dCTP deaminase family. As to quaternary structure, homotrimer.

The catalysed reaction is dCTP + H2O + H(+) = dUTP + NH4(+). It participates in pyrimidine metabolism; dUMP biosynthesis; dUMP from dCTP (dUTP route): step 1/2. Its function is as follows. Catalyzes the deamination of dCTP to dUTP. The polypeptide is dCTP deaminase (Shewanella oneidensis (strain ATCC 700550 / JCM 31522 / CIP 106686 / LMG 19005 / NCIMB 14063 / MR-1)).